We begin with the raw amino-acid sequence, 681 residues long: Glycogen-binding subunit 76A (681 aa).

5 disordered regions span residues 1-20 (MNDPGDIPLTHTSTPDSRPP), 53-94 (LGSQ…DLQP), 232-251 (SLTEVEQTKPEEGKLTNGHL), 285-391 (FADR…ASNL), and 405-435 (QDATEAVEKSGAPSRGTTVDTTDDEDDCRPQ). The segment covering 59-69 (EEGEGNAEDEP) has biased composition (acidic residues). The segment covering 72–91 (NGTSTNTWVNSHDSEQTVTD) has biased composition (polar residues). Basic and acidic residues-rich tracts occupy residues 237-251 (EQTKPEEGKLTNGHL), 297-308 (RVQKESSQERVP), and 321-336 (PSDRVQTDASDERVQE). The segment covering 353–364 (TESISTEVTTLE) has biased composition (polar residues). Over residues 365-374 (RSPEESRNDE) the composition is skewed to basic and acidic residues. The CBM21 domain occupies 525 to 632 (AVREKQVSLE…NNYGANYCFQ (108 aa)). Thr-545 is modified (phosphothreonine). 2 positions are modified to phosphoserine: Ser-547 and Ser-549.

The protein is Glycogen-binding subunit 76A (Gbs-76A) of Drosophila melanogaster (Fruit fly).